We begin with the raw amino-acid sequence, 127 residues long: Large ribosomal subunit protein bL12 (127 aa).

The disordered stretch occupies residues 94–114 (VDGAPSTLKEAASKEEAEEAK). The span at 104-114 (AASKEEAEEAK) shows a compositional bias: basic and acidic residues.

It belongs to the bacterial ribosomal protein bL12 family. In terms of assembly, homodimer. Part of the ribosomal stalk of the 50S ribosomal subunit. Forms a multimeric L10(L12)X complex, where L10 forms an elongated spine to which 2 to 4 L12 dimers bind in a sequential fashion. Binds GTP-bound translation factors.

Forms part of the ribosomal stalk which helps the ribosome interact with GTP-bound translation factors. Is thus essential for accurate translation. In Nitratidesulfovibrio vulgaris (strain ATCC 29579 / DSM 644 / CCUG 34227 / NCIMB 8303 / VKM B-1760 / Hildenborough) (Desulfovibrio vulgaris), this protein is Large ribosomal subunit protein bL12.